We begin with the raw amino-acid sequence, 467 residues long: 3-isopropylmalate dehydratase large subunit (467 aa).

The [4Fe-4S] cluster site is built by Cys347, Cys407, and Cys410.

It belongs to the aconitase/IPM isomerase family. LeuC type 1 subfamily. As to quaternary structure, heterodimer of LeuC and LeuD. The cofactor is [4Fe-4S] cluster.

It carries out the reaction (2R,3S)-3-isopropylmalate = (2S)-2-isopropylmalate. It participates in amino-acid biosynthesis; L-leucine biosynthesis; L-leucine from 3-methyl-2-oxobutanoate: step 2/4. Catalyzes the isomerization between 2-isopropylmalate and 3-isopropylmalate, via the formation of 2-isopropylmaleate. In Prochlorococcus marinus (strain MIT 9301), this protein is 3-isopropylmalate dehydratase large subunit.